A 282-amino-acid polypeptide reads, in one-letter code: MLEKVFHEKSFADQYTYGAKISELYAETLITESGIAKSHQRPLIILDNACGTGSISSTLQRTLDERNKRSLKLTCGDLSEGMVDYTKQRMQAEGWNNAEAKIVNAQDTGLPSDHYTHVYTAFAFNMFPDYKAALRECLRILQPGGTLATSTWKTANWCTIMKPVIATMPGQLSYPTMDEINTMLNKGWDRESDVRAEFEQAGFDHVNITTVEKQCLLPVQEFGEACKILLPYILSKFWTQEQRDQYEADVPSYLMRYLEREYGKDGLAPMKGVAIIASGRKP.

The protein belongs to the class I-like SAM-binding methyltransferase superfamily. As to expression, specifically expressed in conidia.

Its pathway is secondary metabolite biosynthesis. Its function is as follows. Methyltransferase; part of the gene cluster that mediates the biosynthesis of trypacidin, a mycotoxin with antiprotozoal activity and that plays a role in the infection process. The pathway begins with the synthesis of atrochrysone thioester by the polyketide synthase (PKS) tpcC. The atrochrysone carboxyl ACP thioesterase tpcB then breaks the thioester bond and releases the atrochrysone carboxylic acid from tpcC. The decarboxylase tpcK converts atrochrysone carboxylic acid to atrochrysone which is further reduced into emodin anthrone. The next step is performed by the emodin anthrone oxygenase tpcL that catalyzes the oxidation of emodinanthrone to emodin. Emodin O-methyltransferase encoded by tpcA catalyzes methylation of the 8-hydroxy group of emodin to form questin. Ring cleavage of questin by questin oxidase tpcI leads to desmethylsulochrin via several intermediates including questin epoxide. Another methylation step catalyzed by tpcM leads to the formation of sulochrin which is further converted to monomethylsulfochrin by tpcH. Finally, the tpcJ catalyzes the conversion of monomethylsulfochrin to trypacidin. Trypacidin is toxic for human pulmonary and bronchial epithelial cells by initiating the intracellular formation of nitric oxide (NO) and hydrogen peroxide (H(2)O(2)), thus triggering host necrotic cell death. The trypacidin pathway is also able to produce endocrocin via a distinct route from the endocrocin Enc pathway. This Aspergillus fumigatus (strain ATCC MYA-4609 / CBS 101355 / FGSC A1100 / Af293) (Neosartorya fumigata) protein is Methyltransferase tpcH.